The chain runs to 404 residues: Alanine racemase (404 aa).

Lysine 34 serves as the catalytic Proton acceptor; specific for D-alanine. Lysine 34 is subject to N6-(pyridoxal phosphate)lysine. Arginine 133 is a substrate binding site. Residues 226–273 enclose the RPE1 insert domain; the sequence is EVSSNLSYTEEFESNTAALTTTACINKCPDVSVRLTPKLPLKGSYTVR. The Proton acceptor; specific for L-alanine role is filled by tyrosine 298. Methionine 346 is a binding site for substrate.

Belongs to the alanine racemase family. Requires pyridoxal 5'-phosphate as cofactor.

The catalysed reaction is L-alanine = D-alanine. It functions in the pathway amino-acid biosynthesis; D-alanine biosynthesis; D-alanine from L-alanine: step 1/1. Functionally, catalyzes the interconversion of L-alanine and D-alanine. May also act on other amino acids. The polypeptide is Alanine racemase (alr) (Rickettsia prowazekii (strain Madrid E)).